Consider the following 283-residue polypeptide: Thymidylate synthase (283 aa).

Residue Arg-22 participates in dUMP binding. The active-site Nucleophile is the Cys-160. DUMP-binding positions include 180–183, Asn-191, and 221–223; these read RSCD and HIY. (6R)-5,10-methylene-5,6,7,8-tetrahydrofolate is bound at residue Asp-183. Ala-282 contacts (6R)-5,10-methylene-5,6,7,8-tetrahydrofolate.

This sequence belongs to the thymidylate synthase family. Bacterial-type ThyA subfamily. As to quaternary structure, homodimer.

It is found in the cytoplasm. The enzyme catalyses dUMP + (6R)-5,10-methylene-5,6,7,8-tetrahydrofolate = 7,8-dihydrofolate + dTMP. It participates in pyrimidine metabolism; dTTP biosynthesis. In terms of biological role, catalyzes the reductive methylation of 2'-deoxyuridine-5'-monophosphate (dUMP) to 2'-deoxythymidine-5'-monophosphate (dTMP) while utilizing 5,10-methylenetetrahydrofolate (mTHF) as the methyl donor and reductant in the reaction, yielding dihydrofolate (DHF) as a by-product. This enzymatic reaction provides an intracellular de novo source of dTMP, an essential precursor for DNA biosynthesis. The sequence is that of Thymidylate synthase from Shewanella frigidimarina (strain NCIMB 400).